The chain runs to 283 residues: MNVGLHLSIAGGLLKLKERIIKNKTEGVQIFSRSPRGGEAKPFNEKELKGFLEFKEEYKLYPLVVHVPYVMNLASPEEEMFQKSVAMIREDLYRSDQLHADFLVVHVGSHRGAGEERGLARMVEGLKILLSENFKTRILIENTAGSGNEMGYSLDHLAYIISETGHEELGICLDTCHLLAAGYDDVSPEGISAFSREFREKIGEERFCLLHVNDSKHPIGSRKDRHENLEQGYIGREGFINLLNSPFFKRVPWILETPEPGIEEDLVKLKKLREEVLKIPADR.

Zn(2+) is bound by residues histidine 66, histidine 106, glutamate 141, aspartate 174, histidine 177, histidine 211, aspartate 224, histidine 226, and glutamate 256.

It belongs to the AP endonuclease 2 family. Zn(2+) serves as cofactor.

The enzyme catalyses Endonucleolytic cleavage to 5'-phosphooligonucleotide end-products.. Functionally, endonuclease IV plays a role in DNA repair. It cleaves phosphodiester bonds at apurinic or apyrimidinic (AP) sites, generating a 3'-hydroxyl group and a 5'-terminal sugar phosphate. This is Probable endonuclease 4 from Carboxydothermus hydrogenoformans (strain ATCC BAA-161 / DSM 6008 / Z-2901).